The following is a 20-amino-acid chain: Tetracycline resistance leader peptide (20 aa).

The tract at residues Met1 to Leu20 is disordered.

The protein is Tetracycline resistance leader peptide (tetL) of Bacillus subtilis (strain 168).